Here is a 160-residue protein sequence, read N- to C-terminus: Nitrate reductase [NADH] (160 aa).

FAD is bound at residue Thr-37.

It belongs to the nitrate reductase family. As to quaternary structure, homodimer. It depends on FAD as a cofactor. Heme serves as cofactor. Requires Mo-molybdopterin as cofactor.

It catalyses the reaction nitrite + NAD(+) + H2O = nitrate + NADH + H(+). Nitrate reductase is a key enzyme involved in the first step of nitrate assimilation in plants, fungi and bacteria. The chain is Nitrate reductase [NADH] (NIA) from Lotus tetragonolobus (Winged pea).